The following is a 138-amino-acid chain: Basic phospholipase A2 homolog bothropstoxin-II (138 aa).

The first 16 residues, M1 to G16, serve as a signal peptide directing secretion. 7 disulfides stabilise this stretch: C42–C131, C44–C60, C59–C111, C65–C138, C66–C104, C73–C97, and C91–C102. Residues K121 to K133 form an important for membrane-damaging activities in eukaryotes and bacteria; heparin-binding region.

The protein belongs to the phospholipase A2 family. Group II subfamily. D49 sub-subfamily. Homodimer; non-covalently linked (probable alternative/compact dimer conformation). Expressed by the venom gland.

It is found in the secreted. In terms of biological role, snake venom phospholipase A2 (PLA2) that shows low enzymatic activity even tough it conserves the catalytic residues. Shows a strong myotoxic activity and induces indirect hemolysis, anticoagulant properties, and cytotoxic activities. In vivo, it induces muscle necrosis, accompanied by polymorphonuclear cell infiltration, and edema in the mouse paw. It exerts its function even in the absence of extracellular calcium, indicating it is not a calcium-dependent enzyme. A model of myotoxic mechanism has been proposed: an apo Lys49-PLA2 is activated by the entrance of a hydrophobic molecule (e.g. fatty acid) at the hydrophobic channel of the protein leading to a reorientation of a monomer. This reorientation causes a transition between 'inactive' to 'active' states, causing alignment of C-terminal and membrane-docking sites (MDoS) side-by-side and putting the membrane-disruption sites (MDiS) in the same plane, exposed to solvent and in a symmetric position for both monomers. The MDoS region stabilizes the toxin on membrane by the interaction of charged residues with phospholipid head groups. Subsequently, the MDiS region destabilizes the membrane with penetration of hydrophobic residues. This insertion causes a disorganization of the membrane, allowing an uncontrolled influx of ions (i.e. calcium and sodium), and eventually triggering irreversible intracellular alterations and cell death. This is Basic phospholipase A2 homolog bothropstoxin-II from Bothrops jararacussu (Jararacussu).